Consider the following 182-residue polypeptide: Meiotic recombination protein REC104 (182 aa).

In terms of assembly, interacts with REC114 and SPO11.

In terms of biological role, potential transcriptional regulator that is required to activate expression of a number of early meiotic genes including HOP1. The sequence is that of Meiotic recombination protein REC104 (REC104) from Saccharomyces cerevisiae (strain ATCC 204508 / S288c) (Baker's yeast).